The sequence spans 337 residues: Biotin synthase (337 aa).

The Radical SAM core domain maps to 62–289 (NAVQLSTLIS…KAMVRLSAGR (228 aa)). Residues cysteine 77, cysteine 81, and cysteine 84 each contribute to the [4Fe-4S] cluster site. [2Fe-2S] cluster-binding residues include cysteine 121, cysteine 152, cysteine 212, and arginine 284.

This sequence belongs to the radical SAM superfamily. Biotin synthase family. Homodimer. Requires [4Fe-4S] cluster as cofactor. [2Fe-2S] cluster is required as a cofactor.

The catalysed reaction is (4R,5S)-dethiobiotin + (sulfur carrier)-SH + 2 reduced [2Fe-2S]-[ferredoxin] + 2 S-adenosyl-L-methionine = (sulfur carrier)-H + biotin + 2 5'-deoxyadenosine + 2 L-methionine + 2 oxidized [2Fe-2S]-[ferredoxin]. The protein operates within cofactor biosynthesis; biotin biosynthesis; biotin from 7,8-diaminononanoate: step 2/2. Catalyzes the conversion of dethiobiotin (DTB) to biotin by the insertion of a sulfur atom into dethiobiotin via a radical-based mechanism. In Nitrosomonas europaea (strain ATCC 19718 / CIP 103999 / KCTC 2705 / NBRC 14298), this protein is Biotin synthase.